We begin with the raw amino-acid sequence, 456 residues long: UDP-glycosyltransferase 74D1 (456 aa).

Residues serine 279, 332-334, 349-357, and 371-374 contribute to the UDP-alpha-D-glucose site; these read SPQ, HCGWNSTLE, and YSDQ.

It belongs to the UDP-glycosyltransferase family. Expressed in leaves.

Glucosyltransferase that glucosylates jasmonate (JA) and JA derivatives. Also active on indole-3-acetic acid (IAA), 4-coumrate, cinnamate and caffeate. The protein is UDP-glycosyltransferase 74D1 (UGT74D1) of Arabidopsis thaliana (Mouse-ear cress).